A 250-amino-acid chain; its full sequence is Ribosomal RNA small subunit methyltransferase J (250 aa).

Residues 96–97 and aspartate 168 each bind S-adenosyl-L-methionine; that span reads RD.

The protein belongs to the methyltransferase superfamily. RsmJ family.

It localises to the cytoplasm. The catalysed reaction is guanosine(1516) in 16S rRNA + S-adenosyl-L-methionine = N(2)-methylguanosine(1516) in 16S rRNA + S-adenosyl-L-homocysteine + H(+). Specifically methylates the guanosine in position 1516 of 16S rRNA. The sequence is that of Ribosomal RNA small subunit methyltransferase J from Neisseria gonorrhoeae (strain ATCC 700825 / FA 1090).